The primary structure comprises 342 residues: Small GTPase LIP1 (342 aa).

Positions 12-285 (KEQILAPLCG…FHGDPYKYNN (274 aa)) are small GTPase-like. Residues 29 to 36 (GDSGVGKT), 90 to 94 (DVSGH), and 160 to 163 (NKAD) each bind GTP. 2 disordered regions span residues 274-313 (TSFHGDPYKYNNTIPPLPAQRNLTPPPTLYPQQPVSTPDN) and 323-342 (SVQETTNNGSARSKRMDINV). Residues 323–333 (SVQETTNNGSA) are compositionally biased toward polar residues.

Belongs to the small GTPase superfamily.

The protein resides in the nucleus. It is found in the cytoplasm. In terms of biological role, functional small GTPase that acts as a negative factor controlling the light-dependent period shortening of circadian rhythms and light-induced phase resetting during the subjective night. May protect the clock from excessive or mistimed light. Suppresses red and blue light-mediated photomorphogenesis and is required for light-controlled inhibition of endoreplication and tolerance to salt stress. The entrainment of the circadian clock is independent from the other pleiotropic effects. Could be a regulator of seedling establishment. This Arabidopsis thaliana (Mouse-ear cress) protein is Small GTPase LIP1.